A 1258-amino-acid polypeptide reads, in one-letter code: Ice nucleation protein (1258 aa).

Positions 162-1217 are octapeptide periodicity; that stretch reads ATYGSTLSGT…LTAGENSVLI (1056 aa). Disordered regions lie at residues 260 to 287, 311 to 342, 356 to 383, 407 to 438, and 452 to 480; these read YGST…KGSD, TQTA…GYGS, and YGST…GSDL. Composition is skewed to polar residues over residues 261-286, 311-334, 357-382, 407-430, and 453-480; these read GSTQ…QKGS, TQTA…QKGS, and GSTQ…GSDL.

This sequence belongs to the bacterial ice nucleation protein family.

The protein localises to the cell outer membrane. In terms of biological role, ice nucleation proteins enable bacteria to nucleate crystallization in supercooled water. The polypeptide is Ice nucleation protein (iceE) (Enterobacter agglomerans (Erwinia herbicola)).